The sequence spans 37 residues: Large ribosomal subunit protein bL36 (37 aa).

The protein belongs to the bacterial ribosomal protein bL36 family.

This chain is Large ribosomal subunit protein bL36, found in Sulfurovum sp. (strain NBC37-1).